Here is an 867-residue protein sequence, read N- to C-terminus: Transcription factor E2F8 (867 aa).

The segment at Asp-38–Thr-58 is disordered. A phosphoserine mark is found at Ser-71 and Ser-102. DNA-binding regions lie at residues Arg-113 to Gly-182 and Arg-261 to Gly-347. Disordered stretches follow at residues Arg-408 to Pro-432, Gln-532 to Lys-616, and Ala-771 to Val-800. 2 positions are modified to phosphoserine: Ser-413 and Ser-417. Composition is skewed to polar residues over residues Ser-413–Pro-432 and Gln-532–Lys-556. Residues Asp-557–Ala-567 are compositionally biased toward basic and acidic residues. Polar residues predominate over residues Asn-568–Pro-579. Over residues Arg-594 to Ser-604 the composition is skewed to basic and acidic residues. Positions Ala-775 to Val-800 are enriched in polar residues.

The protein belongs to the E2F/DP family. In terms of assembly, homodimer and heterodimer: mainly forms homodimers and, to a lesser extent, heterodimers with E2F8. Dimerization is important for DNA-binding. Interacts with HIF1A.

The protein localises to the nucleus. Its function is as follows. Atypical E2F transcription factor that participates in various processes such as angiogenesis and polyploidization of specialized cells. Mainly acts as a transcription repressor that binds DNA independently of DP proteins and specifically recognizes the E2 recognition site 5'-TTTC[CG]CGC-3'. Directly represses transcription of classical E2F transcription factors such as E2F1: component of a feedback loop in S phase by repressing the expression of E2F1, thereby preventing p53/TP53-dependent apoptosis. Plays a key role in polyploidization of cells in placenta and liver by regulating the endocycle, probably by repressing genes promoting cytokinesis and antagonizing action of classical E2F proteins (E2F1, E2F2 and/or E2F3). Required for placental development by promoting polyploidization of trophoblast giant cells. Acts as a promoter of sprouting angiogenesis, possibly by acting as a transcription activator: associates with HIF1A, recognizes and binds the VEGFA promoter, which is different from canonical E2 recognition site, and activates expression of the VEGFA gene. The protein is Transcription factor E2F8 (E2F8) of Homo sapiens (Human).